The chain runs to 338 residues: 4-hydroxy-2-oxovalerate aldolase (338 aa).

The region spanning 4-254 is the Pyruvate carboxyltransferase domain; sequence PRLTDTTLRD…NPGLDVLALM (251 aa). 12–13 serves as a coordination point for substrate; that stretch reads RD. D13 contacts Mn(2+). H16 serves as the catalytic Proton acceptor. The substrate site is built by S166 and H193. The Mn(2+) site is built by H193 and H195. Position 284 (Y284) interacts with substrate.

Belongs to the 4-hydroxy-2-oxovalerate aldolase family.

The catalysed reaction is (S)-4-hydroxy-2-oxopentanoate = acetaldehyde + pyruvate. This is 4-hydroxy-2-oxovalerate aldolase from Roseiflexus sp. (strain RS-1).